Consider the following 360-residue polypeptide: NAD(P)H-quinone oxidoreductase subunit 1, chloroplastic (360 aa).

Transmembrane regions (helical) follow at residues 27-47, 98-118, 129-149, 165-185, 203-223, 253-273, 297-317, and 340-360; these read VWIFVPIFSLVLGIITGVLVI, FSIGPSIAVISILLSYSVIPF, IGIFLWIAISSIAPIGLLMSG, AAQSISYEIPLTLCVLSISLL, FWGWNLWRQPIGFIIFLISSL, FGLFYVASYLNLLISALFVTI, VFGTTIGIFITLAKTYLVLVI, and FLLPISLGNLLLTTSFQLLSL.

It belongs to the complex I subunit 1 family. NDH is composed of at least 16 different subunits, 5 of which are encoded in the nucleus.

It is found in the plastid. It localises to the chloroplast thylakoid membrane. It catalyses the reaction a plastoquinone + NADH + (n+1) H(+)(in) = a plastoquinol + NAD(+) + n H(+)(out). It carries out the reaction a plastoquinone + NADPH + (n+1) H(+)(in) = a plastoquinol + NADP(+) + n H(+)(out). NDH shuttles electrons from NAD(P)H:plastoquinone, via FMN and iron-sulfur (Fe-S) centers, to quinones in the photosynthetic chain and possibly in a chloroplast respiratory chain. The immediate electron acceptor for the enzyme in this species is believed to be plastoquinone. Couples the redox reaction to proton translocation, and thus conserves the redox energy in a proton gradient. This Draba nemorosa (Woodland whitlowgrass) protein is NAD(P)H-quinone oxidoreductase subunit 1, chloroplastic.